The sequence spans 1017 residues: NLR family CARD domain-containing protein 4 (1017 aa).

The 88-residue stretch at 1-88 folds into the CARD domain; the sequence is MNFIKENSQV…PLFQELHGLS (88 aa). Positions 95-298 are nucleotide-binding domain (NBD); it reads EEDLDDLAQE…QFGALIAEVG (204 aa). The region spanning 163-476 is the NACHT domain; it reads SPCIIEGESG…VTKGNGHLQK (314 aa). Residue 169-176 coordinates ATP; the sequence is GESGKGKS. The winged-helix domain (WHD) stretch occupies residues 356–463; the sequence is SHTQTTLFCT…RLSSLLTSGE (108 aa). Serine 533 carries the post-translational modification Phosphoserine. 12 LRR repeats span residues 578–598, 649–672, 728–751, 755–778, 780–805, 817–840, 841–863, 871–895, 904–926, 929–956, 958–978, and 992–1014; these read FFRG…LFDF, KQEF…DIKY, VTNL…LTDN, LKNL…KLAE, LTNL…DYIV, EIQL…LHNL, ARLS…ALQQ, LEQL…LLEQ, KLGL…FFEK, LENF…GFEN, KELV…SLVR, and EVQL…AFKL.

As to quaternary structure, homooligomer; homooligomerizes following activation of Naip proteins by pathogenic proteins such as S.typhimurium (Salmonella) flagellin or PrgJ. Component of the NLRC4 inflammasome, at least composed of NLRC4, caspase-1 (CASP1) and some NAIP family member. Interacts with EIF2AK2/PKR. Phosphorylated at Ser-533 following infection of macrophages with S.typhimurium (Salmonella). Phosphorylation is essential for NLRC4 inflammasome function to promote caspase-1 activation and pyroptosis. PRKCD phosphorylates Ser-533 in vitro.

Its subcellular location is the cytoplasm. It is found in the cytosol. In terms of biological role, key component of inflammasomes that indirectly senses specific proteins from pathogenic bacteria and fungi and responds by assembling an inflammasome complex that promotes caspase-1 activation, cytokine production and macrophage pyroptosis. The NLRC4 inflammasome is activated as part of the innate immune response to a range of intracellular bacteria. This is NLR family CARD domain-containing protein 4 (NLRC4) from Bos taurus (Bovine).